We begin with the raw amino-acid sequence, 159 residues long: Large ribosomal subunit protein uL15 (159 aa).

A compositionally biased stretch (basic and acidic residues) spans 1–11; the sequence is MKLNELRDNEG. The interval 1–40 is disordered; the sequence is MKLNELRDNEGARYQSKRLGRGIGSGKGKTSGKGVKGQTS. A compositionally biased stretch (gly residues) spans 21-35; it reads RGIGSGKGKTSGKGV.

This sequence belongs to the universal ribosomal protein uL15 family. In terms of assembly, part of the 50S ribosomal subunit.

Binds to the 23S rRNA. This Paramagnetospirillum magneticum (strain ATCC 700264 / AMB-1) (Magnetospirillum magneticum) protein is Large ribosomal subunit protein uL15.